A 186-amino-acid polypeptide reads, in one-letter code: Adenine phosphoribosyltransferase (186 aa).

The protein belongs to the purine/pyrimidine phosphoribosyltransferase family. In terms of assembly, homodimer.

The protein resides in the cytoplasm. The enzyme catalyses AMP + diphosphate = 5-phospho-alpha-D-ribose 1-diphosphate + adenine. It participates in purine metabolism; AMP biosynthesis via salvage pathway; AMP from adenine: step 1/1. Its function is as follows. Catalyzes a salvage reaction resulting in the formation of AMP, that is energically less costly than de novo synthesis. This Xanthomonas oryzae pv. oryzae (strain PXO99A) protein is Adenine phosphoribosyltransferase.